Consider the following 102-residue polypeptide: NADH-quinone oxidoreductase subunit K 1 (102 aa).

The next 3 membrane-spanning stretches (helical) occupy residues Leu-5 to Val-25, Ile-30 to Gly-50, and Val-62 to Val-82.

Belongs to the complex I subunit 4L family. As to quaternary structure, NDH-1 is composed of 14 different subunits. Subunits NuoA, H, J, K, L, M, N constitute the membrane sector of the complex.

It localises to the cell inner membrane. It catalyses the reaction a quinone + NADH + 5 H(+)(in) = a quinol + NAD(+) + 4 H(+)(out). In terms of biological role, NDH-1 shuttles electrons from NADH, via FMN and iron-sulfur (Fe-S) centers, to quinones in the respiratory chain. The immediate electron acceptor for the enzyme in this species is believed to be ubiquinone. Couples the redox reaction to proton translocation (for every two electrons transferred, four hydrogen ions are translocated across the cytoplasmic membrane), and thus conserves the redox energy in a proton gradient. This chain is NADH-quinone oxidoreductase subunit K 1, found in Geotalea uraniireducens (strain Rf4) (Geobacter uraniireducens).